Here is an 813-residue protein sequence, read N- to C-terminus: LPS-assembly protein LptD (813 aa).

An N-terminal signal peptide occupies residues 1 to 22 (MRRALRLLPLPLSIAICLPAMA).

The protein belongs to the LptD family. In terms of assembly, component of the lipopolysaccharide transport and assembly complex. Interacts with LptE and LptA.

The protein resides in the cell outer membrane. Together with LptE, is involved in the assembly of lipopolysaccharide (LPS) at the surface of the outer membrane. The sequence is that of LPS-assembly protein LptD from Xanthomonas oryzae pv. oryzae (strain KACC10331 / KXO85).